The primary structure comprises 123 residues: WAP four-disulfide core domain protein 2 (123 aa).

Residues 1–26 (MPACRLGLLVASLLLGLLLGLPPVTG) form the signal peptide. WAP domains are found at residues 28–69 (GAEK…VTIC) and 72–122 (PNEK…VTPV). 8 disulfide bridges follow: Cys-35–Cys-61, Cys-44–Cys-65, Cys-48–Cys-60, Cys-54–Cys-69, Cys-79–Cys-109, Cys-92–Cys-113, Cys-96–Cys-108, and Cys-102–Cys-118.

As to quaternary structure, homotrimer; disulfide-linked. As to expression, detected in the distal parts of the epididymis.

The protein resides in the secreted. Functionally, broad range protease inhibitor. This is WAP four-disulfide core domain protein 2 (WFDC2) from Sus scrofa (Pig).